The sequence spans 259 residues: Global transcriptional regulator CodY (259 aa).

Residues 1 to 155 form a GAF domain region; that stretch reads MNLLEKTRQL…SATVVGMEIL (155 aa). The H-T-H motif DNA-binding region spans 203-222; sequence ASKIADRVGITRSVIVNALR.

It belongs to the CodY family.

The protein localises to the cytoplasm. Its function is as follows. DNA-binding global transcriptional regulator which is involved in the adaptive response to starvation and acts by directly or indirectly controlling the expression of numerous genes in response to nutrient availability. During rapid exponential growth, CodY is highly active and represses genes whose products allow adaptation to nutrient depletion. This is Global transcriptional regulator CodY from Exiguobacterium sp. (strain ATCC BAA-1283 / AT1b).